A 380-amino-acid polypeptide reads, in one-letter code: 3-dehydroquinate synthase (380 aa).

The protein belongs to the archaeal-type DHQ synthase family.

The catalysed reaction is 2-amino-2,3,7-trideoxy-D-lyxo-hept-6-ulosonate + NAD(+) + H2O = 3-dehydroquinate + NH4(+) + NADH + H(+). Catalyzes the oxidative deamination and cyclization of 2-amino-3,7-dideoxy-D-threo-hept-6-ulosonic acid (ADH) to yield 3-dehydroquinate (DHQ), which is fed into the canonical shikimic pathway of aromatic amino acid biosynthesis. This chain is 3-dehydroquinate synthase, found in Methanosarcina acetivorans (strain ATCC 35395 / DSM 2834 / JCM 12185 / C2A).